The primary structure comprises 418 residues: Hydroxysteroid dehydrogenase-like protein 2 (418 aa).

NADP(+)-binding positions include 17 to 23 (GASRGIG), Lys42, and Asp74. Lys42 is modified (N6-(2-hydroxyisobutyryl)lysine). The residue at position 116 (Lys116) is an N6-acetyllysine. Catalysis depends on Tyr168, which acts as the Proton acceptor. NADP(+) is bound at residue Lys172. In terms of domain architecture, SCP2 spans 306 to 415 (RSGAVEETFR…KLEKLMNQMN (110 aa)). Lys318 carries the post-translational modification N6-succinyllysine.

It belongs to the short-chain dehydrogenases/reductases (SDR) family.

The protein localises to the peroxisome. The protein resides in the mitochondrion. Its function is as follows. Has apparently no steroid dehydrogenase activity. Controls bile acid (BA) and lipid metabolism in response to nutritional cues. The sequence is that of Hydroxysteroid dehydrogenase-like protein 2 (HSDL2) from Bos taurus (Bovine).